The following is a 338-amino-acid chain: UDP-N-acetylglucosamine--N-acetylmuramyl-(pentapeptide) pyrophosphoryl-undecaprenol N-acetylglucosamine transferase (338 aa).

UDP-N-acetyl-alpha-D-glucosamine contacts are provided by residues 10–12, N122, S177, and Q275; that span reads TGG.

The protein belongs to the glycosyltransferase 28 family. MurG subfamily.

The protein localises to the cell inner membrane. It catalyses the reaction di-trans,octa-cis-undecaprenyl diphospho-N-acetyl-alpha-D-muramoyl-L-alanyl-D-glutamyl-meso-2,6-diaminopimeloyl-D-alanyl-D-alanine + UDP-N-acetyl-alpha-D-glucosamine = di-trans,octa-cis-undecaprenyl diphospho-[N-acetyl-alpha-D-glucosaminyl-(1-&gt;4)]-N-acetyl-alpha-D-muramoyl-L-alanyl-D-glutamyl-meso-2,6-diaminopimeloyl-D-alanyl-D-alanine + UDP + H(+). Its pathway is cell wall biogenesis; peptidoglycan biosynthesis. In terms of biological role, cell wall formation. Catalyzes the transfer of a GlcNAc subunit on undecaprenyl-pyrophosphoryl-MurNAc-pentapeptide (lipid intermediate I) to form undecaprenyl-pyrophosphoryl-MurNAc-(pentapeptide)GlcNAc (lipid intermediate II). The sequence is that of UDP-N-acetylglucosamine--N-acetylmuramyl-(pentapeptide) pyrophosphoryl-undecaprenol N-acetylglucosamine transferase from Sulfurovum sp. (strain NBC37-1).